The chain runs to 94 residues: Large ribosomal subunit protein eL42 (94 aa).

Zn(2+) is bound by residues Cys-11, Cys-14, Cys-71, and Cys-74. Residues 11 to 74 form a C4-type zinc finger; it reads CPYCKRHTIH…LDLRFVCTVC (64 aa).

This sequence belongs to the eukaryotic ribosomal protein eL42 family. Part of the 50S ribosomal subunit. The cofactor is Zn(2+).

Its function is as follows. Binds to the 23S rRNA. This chain is Large ribosomal subunit protein eL42, found in Pyrococcus horikoshii (strain ATCC 700860 / DSM 12428 / JCM 9974 / NBRC 100139 / OT-3).